The primary structure comprises 158 residues: Non-secretory ribonuclease (158 aa).

The first 27 residues, 1–27, serve as a signal peptide directing secretion; sequence MVPKLFTSQICLLLLLGLLGVEGSLHA. H42 functions as the Proton acceptor in the catalytic mechanism. 4 disulfides stabilise this stretch: C50–C110, C64–C121, C82–C136, and C89–C98. 3'-nitrotyrosine is present on Y60. 65-69 serves as a coordination point for substrate; that stretch reads KNQNT. Residues N86, N92, and N111 are each glycosylated (N-linked (GlcNAc...) asparagine). H153 functions as the Proton donor in the catalytic mechanism.

It belongs to the pancreatic ribonuclease family. As to quaternary structure, interacts with and forms a tight 1:1 complex with RNH1. Dimerization of two such complexes may occur.

The protein localises to the lysosome. The protein resides in the cytoplasmic granule. It carries out the reaction an [RNA] containing cytidine + H2O = an [RNA]-3'-cytidine-3'-phosphate + a 5'-hydroxy-ribonucleotide-3'-[RNA].. It catalyses the reaction an [RNA] containing uridine + H2O = an [RNA]-3'-uridine-3'-phosphate + a 5'-hydroxy-ribonucleotide-3'-[RNA].. Functionally, this is a non-secretory ribonuclease. It is a pyrimidine specific nuclease with a slight preference for U. Cytotoxin and helminthotoxin. Possesses a wide variety of biological activities. In Aotus trivirgatus (Three-striped night monkey), this protein is Non-secretory ribonuclease (RNASE2).